Consider the following 189-residue polypeptide: Elongation factor P (189 aa).

Belongs to the elongation factor P family.

The protein resides in the cytoplasm. It participates in protein biosynthesis; polypeptide chain elongation. Its function is as follows. Involved in peptide bond synthesis. Stimulates efficient translation and peptide-bond synthesis on native or reconstituted 70S ribosomes in vitro. Probably functions indirectly by altering the affinity of the ribosome for aminoacyl-tRNA, thus increasing their reactivity as acceptors for peptidyl transferase. This Pseudomonas entomophila (strain L48) protein is Elongation factor P.